Here is a 210-residue protein sequence, read N- to C-terminus: Ribonuclease HII (210 aa).

The region spanning 18–207 (RFVAGVDEVG…VHKILCKEET (190 aa)) is the RNase H type-2 domain. The a divalent metal cation site is built by aspartate 24, glutamate 25, and aspartate 115.

The protein belongs to the RNase HII family. Mn(2+) is required as a cofactor. Mg(2+) serves as cofactor.

Its subcellular location is the cytoplasm. It carries out the reaction Endonucleolytic cleavage to 5'-phosphomonoester.. In terms of biological role, endonuclease that specifically degrades the RNA of RNA-DNA hybrids. The polypeptide is Ribonuclease HII (Paracoccus denitrificans (strain Pd 1222)).